Consider the following 343-residue polypeptide: tRNA N6-adenosine threonylcarbamoyltransferase (343 aa).

Fe cation is bound by residues His115 and His119. Substrate is bound by residues 137–141, Asp170, Gly183, Asp187, and Asn276; that span reads IVSGG. Residue Asp304 participates in Fe cation binding.

Belongs to the KAE1 / TsaD family. It depends on Fe(2+) as a cofactor.

The protein localises to the cytoplasm. The catalysed reaction is L-threonylcarbamoyladenylate + adenosine(37) in tRNA = N(6)-L-threonylcarbamoyladenosine(37) in tRNA + AMP + H(+). Required for the formation of a threonylcarbamoyl group on adenosine at position 37 (t(6)A37) in tRNAs that read codons beginning with adenine. Is involved in the transfer of the threonylcarbamoyl moiety of threonylcarbamoyl-AMP (TC-AMP) to the N6 group of A37, together with TsaE and TsaB. TsaD likely plays a direct catalytic role in this reaction. In Staphylococcus carnosus (strain TM300), this protein is tRNA N6-adenosine threonylcarbamoyltransferase.